We begin with the raw amino-acid sequence, 173 residues long: Crossover junction endodeoxyribonuclease RuvC (173 aa).

Active-site residues include aspartate 8, glutamate 67, and aspartate 139. Mg(2+)-binding residues include aspartate 8, glutamate 67, and aspartate 139.

It belongs to the RuvC family. Homodimer which binds Holliday junction (HJ) DNA. The HJ becomes 2-fold symmetrical on binding to RuvC with unstacked arms; it has a different conformation from HJ DNA in complex with RuvA. In the full resolvosome a probable DNA-RuvA(4)-RuvB(12)-RuvC(2) complex forms which resolves the HJ. The cofactor is Mg(2+).

The protein resides in the cytoplasm. The catalysed reaction is Endonucleolytic cleavage at a junction such as a reciprocal single-stranded crossover between two homologous DNA duplexes (Holliday junction).. In terms of biological role, the RuvA-RuvB-RuvC complex processes Holliday junction (HJ) DNA during genetic recombination and DNA repair. Endonuclease that resolves HJ intermediates. Cleaves cruciform DNA by making single-stranded nicks across the HJ at symmetrical positions within the homologous arms, yielding a 5'-phosphate and a 3'-hydroxyl group; requires a central core of homology in the junction. The consensus cleavage sequence is 5'-(A/T)TT(C/G)-3'. Cleavage occurs on the 3'-side of the TT dinucleotide at the point of strand exchange. HJ branch migration catalyzed by RuvA-RuvB allows RuvC to scan DNA until it finds its consensus sequence, where it cleaves and resolves the cruciform DNA. The protein is Crossover junction endodeoxyribonuclease RuvC of Vibrio vulnificus (strain CMCP6).